The primary structure comprises 101 residues: Small ribosomal subunit protein uS14 (101 aa).

The disordered stretch occupies residues 1 to 20 (MAKTSAVEKNKRRRKLVANH). Basic residues predominate over residues 10–20 (NKRRRKLVANH).

The protein belongs to the universal ribosomal protein uS14 family. As to quaternary structure, part of the 30S ribosomal subunit. Contacts proteins S3 and S10.

In terms of biological role, binds 16S rRNA, required for the assembly of 30S particles and may also be responsible for determining the conformation of the 16S rRNA at the A site. The polypeptide is Small ribosomal subunit protein uS14 (Sinorhizobium medicae (strain WSM419) (Ensifer medicae)).